The sequence spans 288 residues: Urease accessory protein UreD (288 aa).

It belongs to the UreD family. In terms of assembly, ureD, UreF and UreG form a complex that acts as a GTP-hydrolysis-dependent molecular chaperone, activating the urease apoprotein by helping to assemble the nickel containing metallocenter of UreC. The UreE protein probably delivers the nickel.

Its subcellular location is the cytoplasm. Its function is as follows. Required for maturation of urease via the functional incorporation of the urease nickel metallocenter. This chain is Urease accessory protein UreD, found in Dechloromonas aromatica (strain RCB).